Here is a 54-residue protein sequence, read N- to C-terminus: Small ribosomal subunit protein uS14 (54 aa).

Cysteine 19, cysteine 22, cysteine 37, and cysteine 40 together coordinate Zn(2+).

It belongs to the universal ribosomal protein uS14 family. Zinc-binding uS14 subfamily. In terms of assembly, part of the 30S ribosomal subunit. Requires Zn(2+) as cofactor.

Functionally, binds 16S rRNA, required for the assembly of 30S particles. This Saccharolobus solfataricus (strain ATCC 35092 / DSM 1617 / JCM 11322 / P2) (Sulfolobus solfataricus) protein is Small ribosomal subunit protein uS14.